The primary structure comprises 82 residues: UPF0235 protein Pden_2174 (82 aa).

This sequence belongs to the UPF0235 family.

This is UPF0235 protein Pden_2174 from Paracoccus denitrificans (strain Pd 1222).